The chain runs to 314 residues: Hydroxyethylthiazole kinase (314 aa).

Met70 contacts substrate. ATP is bound by residues Arg145 and Ser217. A substrate-binding site is contributed by Gly244.

It belongs to the Thz kinase family. The cofactor is Mg(2+).

The catalysed reaction is 5-(2-hydroxyethyl)-4-methylthiazole + ATP = 4-methyl-5-(2-phosphooxyethyl)-thiazole + ADP + H(+). It participates in cofactor biosynthesis; thiamine diphosphate biosynthesis; 4-methyl-5-(2-phosphoethyl)-thiazole from 5-(2-hydroxyethyl)-4-methylthiazole: step 1/1. Functionally, catalyzes the phosphorylation of the hydroxyl group of 4-methyl-5-beta-hydroxyethylthiazole (THZ). This chain is Hydroxyethylthiazole kinase, found in Bifidobacterium longum (strain DJO10A).